A 485-amino-acid chain; its full sequence is G2/mitotic-specific cyclin-A1 (485 aa).

The disordered stretch occupies residues 1–24; it reads MRSALSLKPSNGNAAKSQAVNNKN. A compositionally biased stretch (polar residues) spans 8–24; that stretch reads KPSNGNAAKSQAVNNKN.

This sequence belongs to the cyclin family. Cyclin AB subfamily. As to expression, expressed in the cell lineages ABarp, C and E as well as the NSM neuroblasts.

In terms of biological role, involved in the control of the cell cycle after S phase. May bind to and activate cdk-1 and/or cdk-2 to promote cell cycle progression. Necessary for embryogenesis. The polypeptide is G2/mitotic-specific cyclin-A1 (cya-1) (Caenorhabditis elegans).